The primary structure comprises 189 residues: HGPRTase-like protein (189 aa).

The protein belongs to the purine/pyrimidine phosphoribosyltransferase family. Archaeal HPRT subfamily.

Functionally, may catalyze a purine salvage reaction, the substrate is unknown. The protein is HGPRTase-like protein of Halomicrobium mukohataei (strain ATCC 700874 / DSM 12286 / JCM 9738 / NCIMB 13541) (Haloarcula mukohataei).